We begin with the raw amino-acid sequence, 80 residues long: RNA-binding protein Hfq (80 aa).

The Sm domain maps to 10–70; the sequence is DLFLNTVRKQ…ISTIMPGQPM (61 aa).

It belongs to the Hfq family. Homohexamer.

Its function is as follows. RNA chaperone that binds small regulatory RNA (sRNAs) and mRNAs to facilitate mRNA translational regulation in response to envelope stress, environmental stress and changes in metabolite concentrations. Also binds with high specificity to tRNAs. The protein is RNA-binding protein Hfq of Rhizobium etli (strain CIAT 652).